A 194-amino-acid polypeptide reads, in one-letter code: GTP cyclohydrolase 1 (194 aa).

Residues Cys83, His86, and Cys155 each contribute to the Zn(2+) site.

Belongs to the GTP cyclohydrolase I family. As to quaternary structure, toroid-shaped homodecamer, composed of two pentamers of five dimers.

The catalysed reaction is GTP + H2O = 7,8-dihydroneopterin 3'-triphosphate + formate + H(+). Its pathway is cofactor biosynthesis; 7,8-dihydroneopterin triphosphate biosynthesis; 7,8-dihydroneopterin triphosphate from GTP: step 1/1. In Streptococcus pyogenes, this protein is GTP cyclohydrolase 1 (folE).